Consider the following 205-residue polypeptide: Urease accessory protein UreG (205 aa).

14–21 (GPVGSGKT) is a GTP binding site.

The protein belongs to the SIMIBI class G3E GTPase family. UreG subfamily. Homodimer. UreD, UreF and UreG form a complex that acts as a GTP-hydrolysis-dependent molecular chaperone, activating the urease apoprotein by helping to assemble the nickel containing metallocenter of UreC. The UreE protein probably delivers the nickel.

It localises to the cytoplasm. Functionally, facilitates the functional incorporation of the urease nickel metallocenter. This process requires GTP hydrolysis, probably effectuated by UreG. The sequence is that of Urease accessory protein UreG from Proteus mirabilis (strain HI4320).